The primary structure comprises 395 residues: PCI domain-containing protein 2 homolog (395 aa).

The region spanning 208–389 is the PCI domain; that stretch reads ITYKYFVGRR…NKLVVSKQNP (182 aa).

It belongs to the CSN12 family. As to quaternary structure, component of the nuclear pore complex (NPC)-associated TREX-2/AMEX complex (anchoring and mRNA export complex), composed of e(y)2, xmas and PCID2. Interaction between the TREX-2/AMEX complex and the ORC complex is required for ORC localization to mRNPs, and consequently mRNA export. Within the TREX-2/AMEX-ORC complex, interacts with Orc3 and Orc4. Interacts with sbr/NXF1. Interacts with Moe. Interacts with nudC; required to maintain stability in the cytoplasm. Mono- and poly-ubiquitinated.

Its subcellular location is the nucleus. It is found in the cytoplasm. The protein resides in the nucleus membrane. The protein localises to the cytoskeleton. In terms of biological role, required for the export of nuclear mRNAs and involved in mRNA trafficking in the cytoplasm. Component of the nuclear pore complex (NPC)-associated TREX-2/AMEX complex (anchoring and mRNA export complex) which functions in docking export-competent ribonucleoprotein particles (mRNPs) to the nuclear entrance of the nuclear pore complex (nuclear basket), thereby enabling the export of mRNAs to the cytoplasm through the nuclear pores. Within the complex, specifically promotes the association of factors involved in regulating nuclear mRNA export, such as Moe, sbr/NXF1 and the ORC complex, to the mRNPs particles. In the cytoplasm, functions independently of its role in the TREX-2/AMEX complex, to promote cytoplasmic mRNA trafficking together with nudC. Associates with translationally active polysomes. The chain is PCI domain-containing protein 2 homolog from Drosophila melanogaster (Fruit fly).